The primary structure comprises 1003 residues: Anoctamin-2 (1003 aa).

The tract at residues 1–68 (MATPGPRDIP…PCGGESTRSS (68 aa)) is disordered. The Cytoplasmic segment spans residues 1–365 (MATPGPRDIP…FGEKIGLYFA (365 aa)). Positions 10 to 21 (PLLPGSPRRLSP) are enriched in low complexity. Residues 366–386 (WLGLYTSFLIPSSVIGVIVFL) form a helical membrane-spanning segment. Over 387 to 434 (YGCATIEEDIPSREMCDQQNAFTMCPLCDKSCDYWNLSSACGTAQASH) the chain is Extracellular. N-linked (GlcNAc...) asparagine glycosylation occurs at Asn-422. Residues 435–455 (LFDNPATVFFSIFMALWATMF) traverse the membrane as a helical segment. At 456–538 (LENWKRLQMR…KDRFPGYLMN (83 aa)) the chain is on the cytoplasmic side. A helical transmembrane segment spans residues 539-559 (FASILFMIALTFSIVFGVIVY). The Extracellular portion of the chain corresponds to 560–582 (RITTAAALSLNKATRSNVRVTVT). Residues 583-603 (ATAVIINLVVILILDEIYGAV) form a helical membrane-spanning segment. At 604–623 (AKWLTKIEVPKTEQTFEERL) the chain is on the cytoplasmic side. Residues 624-644 (ILKAFLLKFVNAYSPIFYVAF) form a helical membrane-spanning segment. At 645-748 (FKGRFVGRPG…YTGLTPEYME (104 aa)) the chain is on the extracellular side. A helical membrane pass occupies residues 749–769 (MIIQFGFVTLFVASFPLAPVF). The Cytoplasmic portion of the chain corresponds to 770 to 801 (ALLNNVIEVRLDAKKFVTELRRPDAVRTKDIG). Residues 802 to 822 (IWFDILSGIGKFSVISNAFVI) form a helical membrane-spanning segment. Over 823–907 (AITSDFIPRL…QYWFILSARL (85 aa)) the chain is Extracellular. N-linked (GlcNAc...) asparagine glycans are attached at residues Asn-841, Asn-849, and Asn-856. A helical transmembrane segment spans residues 908–928 (AFVIIFQNLVMFLSVLVDWMI). Residues 929-1003 (PDIPTDISDQ…MSSGSQHTNV (75 aa)) are Cytoplasmic-facing. The tract at residues 961 to 1003 (MDEPALRSPGGGDRSRSRAASSAPSGQSQLGSMMSSGSQHTNV) is disordered. Positions 978–1003 (RAASSAPSGQSQLGSMMSSGSQHTNV) are enriched in low complexity. The DLG4 binding (PDZ) motif lies at 1001 to 1003 (TNV).

The protein belongs to the anoctamin family. Homodimer. Component of a presynaptic protein complex recruited to specialized plasma membrane domains of photoreceptors. Interacts with DLG4 by its C-terminal region. As to expression, retina, especially in the photoreceptor synaptic terminals.

It is found in the cell membrane. The catalysed reaction is chloride(in) = chloride(out). With respect to regulation, channel activity is repressed by chloride inhibitors; strongly by niflumic acid (NFA), partially by flufenamic acid (FFA), and only slightly by meclofenamic acid (MFA), 5-Nitro-2-(3-phenylpropylamino)benzoic acid (NPPB), 4-acetamido-4'-isothiocyanato-stilben-2,2'-disulfonate (SITS), and 4,4'-diisothiocyanatostilbene-2,2'-disulfonic acid (DIDS). Calcium-activated chloride channel (CaCC) which may play a role in olfactory signal transduction. Odorant molecules bind to odor-sensing receptors (OSRs), leading to an increase in calcium entry that activates CaCC current which amplifies the depolarization of the OSR cells, ANO2 seems to be the underlying chloride channel involved in this process. May mediate light perception amplification in retina. The polypeptide is Anoctamin-2 (ANO2) (Homo sapiens (Human)).